The chain runs to 712 residues: Sesterterpene synthase btcA (712 aa).

The segment at 1–332 (MTTIWEHCVD…CANCPRHHAW (332 aa)) is terpene cyclase. Aspartate 96 contributes to the Mg(2+) binding site. Residues aspartate 96, asparagine 234, 238–242 (SWDRE), and 328–329 (RH) each bind substrate. The short motif at 96–100 (DDLCD) is the DDXXD 1 element. An NSE/DTE motif is present at residues 234–242 (NDYWSWDRE). Residues 333-706 (RDEESSPSER…VMRIVLSRLS (374 aa)) form a prenyltransferase region. The interval 334-373 (DEESSPSERSFSPSNEGIEDPRLSPGASTTSSMSQKSSPA) is disordered. Composition is skewed to low complexity over residues 340 to 349 (SERSFSPSNE) and 361 to 373 (STTS…SSPA). Positions 414, 417, and 446 each coordinate isopentenyl diphosphate. Mg(2+) is bound by residues aspartate 453 and aspartate 457. A DDXXD 2 motif is present at residues 453 to 457 (DDIED). Residue arginine 462 participates in dimethylallyl diphosphate binding. Arginine 463 provides a ligand contact to isopentenyl diphosphate. Dimethylallyl diphosphate is bound by residues lysine 540, threonine 541, glutamine 580, asparagine 587, lysine 597, and lysine 607.

It in the N-terminal section; belongs to the terpene synthase family. The protein in the C-terminal section; belongs to the FPP/GGPP synthase family. In terms of assembly, hexamer. The cofactor is Mg(2+).

The enzyme catalyses isopentenyl diphosphate + (2E,6E)-farnesyl diphosphate = (2E,6E,10E)-geranylgeranyl diphosphate + diphosphate. The catalysed reaction is isopentenyl diphosphate + (2E,6E,10E)-geranylgeranyl diphosphate = (2E,6E,10E,14E)-geranylfarnesyl diphosphate + diphosphate. The protein operates within secondary metabolite biosynthesis; terpenoid biosynthesis. In terms of biological role, bifunctional terpene synthase; part of the gene cluster that mediates the biosynthesis of betaestacins. The bifunctional terpene synthase btcA converts isopentenyl diphosphate (IPP) and dimethylallyl diphosphate (DMAPP) into the sesterterpene betaestacin I. The C-terminal prenyltransferase (PT) domain of btcA catalyzes formation of GFPP, whereas the N-terminal terpene cyclase (TC) domain catalyzes the cyclization of GFPP into betaestacin I. The cytochrome P450 monooxygenase btcB oxidizes the C25 methyl group of betaestacin I to yield the carboxylic acid betaestacin IV via the alcohol betaestacin III. The cytochrome P450 monooxygenase btcC further catalyzes the multistep oxidation of betaestacin IV to produce several compounds, including betaestacins Va, Vb, Vc and VI. The polypeptide is Sesterterpene synthase btcA (Colletotrichum orbiculare (strain 104-T / ATCC 96160 / CBS 514.97 / LARS 414 / MAFF 240422) (Cucumber anthracnose fungus)).